The primary structure comprises 332 residues: Flotillin-like protein FloA (332 aa).

The chain crosses the membrane as a helical span at residues 9 to 29; it reads FILIGGGIIFVVLFFHYVPFF.

The protein belongs to the flotillin-like FloA family. As to quaternary structure, homooligomerizes.

It localises to the cell membrane. It is found in the membrane raft. Its function is as follows. Found in functional membrane microdomains (FMM) that may be equivalent to eukaryotic membrane rafts. FMMs are highly dynamic and increase in number as cells age. Flotillins are thought to be important factors in membrane fluidity. This is Flotillin-like protein FloA from Phocaeicola vulgatus (strain ATCC 8482 / DSM 1447 / JCM 5826 / CCUG 4940 / NBRC 14291 / NCTC 11154) (Bacteroides vulgatus).